The chain runs to 119 residues: Large ribosomal subunit protein bL20 (119 aa).

The protein belongs to the bacterial ribosomal protein bL20 family.

Its function is as follows. Binds directly to 23S ribosomal RNA and is necessary for the in vitro assembly process of the 50S ribosomal subunit. It is not involved in the protein synthesizing functions of that subunit. The sequence is that of Large ribosomal subunit protein bL20 from Nitrosospira multiformis (strain ATCC 25196 / NCIMB 11849 / C 71).